A 572-amino-acid polypeptide reads, in one-letter code: Proline--tRNA ligase (572 aa).

This sequence belongs to the class-II aminoacyl-tRNA synthetase family. ProS type 1 subfamily. Homodimer.

The protein localises to the cytoplasm. It carries out the reaction tRNA(Pro) + L-proline + ATP = L-prolyl-tRNA(Pro) + AMP + diphosphate. Its function is as follows. Catalyzes the attachment of proline to tRNA(Pro) in a two-step reaction: proline is first activated by ATP to form Pro-AMP and then transferred to the acceptor end of tRNA(Pro). As ProRS can inadvertently accommodate and process non-cognate amino acids such as alanine and cysteine, to avoid such errors it has two additional distinct editing activities against alanine. One activity is designated as 'pretransfer' editing and involves the tRNA(Pro)-independent hydrolysis of activated Ala-AMP. The other activity is designated 'posttransfer' editing and involves deacylation of mischarged Ala-tRNA(Pro). The misacylated Cys-tRNA(Pro) is not edited by ProRS. The polypeptide is Proline--tRNA ligase (Klebsiella pneumoniae subsp. pneumoniae (strain ATCC 700721 / MGH 78578)).